The sequence spans 103 residues: MAGQKIRIRLRAYDHEVIDSSARKIVDTVTRTGAKVAGPVPLPTEKNVFCVIRSPHKYKDSREHFEMRTHKRLIDILEPTPKTVDSLMRLDLPAGVDIEIKLP.

The protein belongs to the universal ribosomal protein uS10 family. Part of the 30S ribosomal subunit.

Its function is as follows. Involved in the binding of tRNA to the ribosomes. This is Small ribosomal subunit protein uS10 from Cutibacterium acnes (strain DSM 16379 / KPA171202) (Propionibacterium acnes).